Consider the following 465-residue polypeptide: Iron-sulfur cluster assembly SufBD family protein SE_0610 (465 aa).

It belongs to the iron-sulfur cluster assembly SufBD family.

This chain is Iron-sulfur cluster assembly SufBD family protein SE_0610, found in Staphylococcus epidermidis (strain ATCC 12228 / FDA PCI 1200).